The primary structure comprises 355 residues: UDP-N-acetylglucosamine--N-acetylmuramyl-(pentapeptide) pyrophosphoryl-undecaprenol N-acetylglucosamine transferase (355 aa).

UDP-N-acetyl-alpha-D-glucosamine-binding positions include 15-17 (TGG), N127, R163, S191, I245, 264-269 (ALTVSE), and Q289.

This sequence belongs to the glycosyltransferase 28 family. MurG subfamily.

Its subcellular location is the cell inner membrane. The enzyme catalyses di-trans,octa-cis-undecaprenyl diphospho-N-acetyl-alpha-D-muramoyl-L-alanyl-D-glutamyl-meso-2,6-diaminopimeloyl-D-alanyl-D-alanine + UDP-N-acetyl-alpha-D-glucosamine = di-trans,octa-cis-undecaprenyl diphospho-[N-acetyl-alpha-D-glucosaminyl-(1-&gt;4)]-N-acetyl-alpha-D-muramoyl-L-alanyl-D-glutamyl-meso-2,6-diaminopimeloyl-D-alanyl-D-alanine + UDP + H(+). The protein operates within cell wall biogenesis; peptidoglycan biosynthesis. Functionally, cell wall formation. Catalyzes the transfer of a GlcNAc subunit on undecaprenyl-pyrophosphoryl-MurNAc-pentapeptide (lipid intermediate I) to form undecaprenyl-pyrophosphoryl-MurNAc-(pentapeptide)GlcNAc (lipid intermediate II). The sequence is that of UDP-N-acetylglucosamine--N-acetylmuramyl-(pentapeptide) pyrophosphoryl-undecaprenol N-acetylglucosamine transferase from Yersinia enterocolitica serotype O:8 / biotype 1B (strain NCTC 13174 / 8081).